The following is a 345-amino-acid chain: Transcription factor 19 (345 aa).

Residues 31-88 (YRLGHRADLCDVALRPQQEPGLISGIHAELHAEPRGDDWRVSLEDHSLQGTLVNNVRL) form the FHA domain. Disordered regions lie at residues 138-167 (RSRG…STLS) and 190-277 (LTFS…KYPV). The PHD-type zinc finger occupies 293–342 (AAPCCCLPQEETVAWVQCDGCDVWFHVACVGCSIQAAREADFRCPGCRAG). 8 residues coordinate Zn(2+): cysteine 296, cysteine 298, cysteine 310, cysteine 313, histidine 318, cysteine 321, cysteine 336, and cysteine 339.

The protein resides in the nucleus. Functionally, potential transcription factor that may play a role in the regulation of genes involved in cell cycle G1/S transition. May bind to regulatory elements of genes, including the promoter of the transcription factor FOXO1. This Macaca mulatta (Rhesus macaque) protein is Transcription factor 19 (TCF19).